Here is a 480-residue protein sequence, read N- to C-terminus: Uridine 5'-monophosphate synthase (480 aa).

Alanine 2 is subject to N-acetylalanine. An OPRTase region spans residues 2-214; that stretch reads AAVGAALGPL…VFVAANHNGS (213 aa). Tyrosine 37 is subject to Phosphotyrosine. The residue at position 214 (serine 214) is a Phosphoserine. Residues 215–220 are domain linker; sequence PLSIKE. An OMPdecase region spans residues 221-480; sequence APKELSFSAR…WEAYLSRLGV (260 aa). Residue serine 257 participates in orotidine 5'-phosphate binding. UMP is bound by residues serine 257, aspartate 259, and 281–283; that span reads KTH. Orotidine 5'-phosphate-binding positions include lysine 281, lysine 314, aspartate 317, threonine 321, serine 372, 430-432, and 450-451; these read QQY and GR. Catalysis depends on for OMPdecase activity residues lysine 314 and aspartate 317. UMP is bound by residues aspartate 317, threonine 321, serine 372, 430-432, and 450-451; these read QQY and GR.

It in the N-terminal section; belongs to the purine/pyrimidine phosphoribosyltransferase family. The protein in the C-terminal section; belongs to the OMP decarboxylase family. In terms of assembly, homodimer; dimerization is required for enzymatic activity.

The enzyme catalyses orotidine 5'-phosphate + diphosphate = orotate + 5-phospho-alpha-D-ribose 1-diphosphate. The catalysed reaction is orotidine 5'-phosphate + H(+) = UMP + CO2. The protein operates within pyrimidine metabolism; UMP biosynthesis via de novo pathway; UMP from orotate: step 1/2. Its pathway is pyrimidine metabolism; UMP biosynthesis via de novo pathway; UMP from orotate: step 2/2. Bifunctional enzyme catalyzing the last two steps of de novo pyrimidine biosynthesis, orotate phosphoribosyltransferase (OPRT), which converts orotate to orotidine-5'-monophosphate (OMP), and orotidine-5'-monophosphate decarboxylase (ODC), the terminal enzymatic reaction that decarboxylates OMP to uridine monophosphate (UMP). The protein is Uridine 5'-monophosphate synthase (UMPS) of Pongo abelii (Sumatran orangutan).